Reading from the N-terminus, the 689-residue chain is MAREYSLLNTRNIGIMAHIDAGKTTTTERILFHTGKIHKIGETHEGASQMDWMAQEQERGITITSAATTAFWKNTRFNIIDTPGHVDFTVEVERSLRVLDGAVAVLDGQSGVEPQTETVWRQATNYKVPRIVFVNKMDKTGADFIYSVKTIGDRLGAKAAPIQLPIGAEENFTGIIDLVEMKAYEFDGKPEENYKEIEIPTNLLEQAKELRAHLVEVAVEYDEELLMKFLDGGEISISELKSAIRKGVINADFFPVLAGSAFKNKGVKLLLDAVVDYLPSPLDIPSIKGILPTGEEVERHADDTEPFSALAFKVMTDPFVGKLTFFRVYSGILTKGSYVLNSTKQQKERVGRILQMHANNRTEIEEVYSGDIATAVGLKNTTTGDTLCDEKGEIILESMVFPEPVIQLALEPKTKADQEKMSIALSKLAEEDPTFRTYTDDETGQTIIAGMGELHLDIIVDRMKREFNVATNVGAPQVSYRETIKLPGKAEGKYIKQSGGRGSYGHVVIEFEPNKDKGFEWVDKITGGRVSKEYINSARVGLENALRNGVIAGYPMIDVKATIVDGSMHEVDSNEMAYKIAASMALKEASKKMNPVVLEPIMNVEVTVPDEYYGDVMGNISSKRGIIEGSEQRGNAQTIKSKVPLTEMFGYATELRSFTQGRGNYTMIFSHYAEAPKAIADEIIKKSGK.

Positions 8 to 282 (LNTRNIGIMA…AVVDYLPSPL (275 aa)) constitute a tr-type G domain. GTP is bound by residues 17–24 (AHIDAGKT), 81–85 (DTPGH), and 135–138 (NKMD).

Belongs to the TRAFAC class translation factor GTPase superfamily. Classic translation factor GTPase family. EF-G/EF-2 subfamily.

It localises to the cytoplasm. Catalyzes the GTP-dependent ribosomal translocation step during translation elongation. During this step, the ribosome changes from the pre-translocational (PRE) to the post-translocational (POST) state as the newly formed A-site-bound peptidyl-tRNA and P-site-bound deacylated tRNA move to the P and E sites, respectively. Catalyzes the coordinated movement of the two tRNA molecules, the mRNA and conformational changes in the ribosome. This chain is Elongation factor G, found in Mycoplasma mycoides subsp. mycoides SC (strain CCUG 32753 / NCTC 10114 / PG1).